A 142-amino-acid polypeptide reads, in one-letter code: DNA-directed RNA polymerase subunit omega (142 aa).

The segment at 104–142 is disordered; it reads FNTDADVDQESTDIQDDEVENEMSNQDSEDIDDEVDNEE. The span at 108–142 shows a compositional bias: acidic residues; that stretch reads ADVDQESTDIQDDEVENEMSNQDSEDIDDEVDNEE.

This sequence belongs to the RNA polymerase subunit omega family. In terms of assembly, the RNAP catalytic core consists of 2 alpha, 1 beta, 1 beta' and 1 omega subunit. When a sigma factor is associated with the core the holoenzyme is formed, which can initiate transcription.

The enzyme catalyses RNA(n) + a ribonucleoside 5'-triphosphate = RNA(n+1) + diphosphate. Its function is as follows. Promotes RNA polymerase assembly. Latches the N- and C-terminal regions of the beta' subunit thereby facilitating its interaction with the beta and alpha subunits. The sequence is that of DNA-directed RNA polymerase subunit omega from Wolbachia sp. subsp. Brugia malayi (strain TRS).